The chain runs to 424 residues: Tyrosine--tRNA ligase (424 aa).

Tyr37 lines the L-tyrosine pocket. A 'HIGH' region motif is present at residues 42 to 51 (PTADSLHLGH). L-tyrosine is bound by residues Tyr175 and Gln179. A 'KMSKS' region motif is present at residues 235 to 239 (KFGKT). Lys238 serves as a coordination point for ATP. In terms of domain architecture, S4 RNA-binding spans 357–414 (ADLMQALVDAELQPSRGQARKTIASNAVTINGEKQSDPEYIFNDEDRLFGRYTLLRRG).

The protein belongs to the class-I aminoacyl-tRNA synthetase family. TyrS type 1 subfamily. Homodimer.

The protein localises to the cytoplasm. The catalysed reaction is tRNA(Tyr) + L-tyrosine + ATP = L-tyrosyl-tRNA(Tyr) + AMP + diphosphate + H(+). Functionally, catalyzes the attachment of tyrosine to tRNA(Tyr) in a two-step reaction: tyrosine is first activated by ATP to form Tyr-AMP and then transferred to the acceptor end of tRNA(Tyr). The protein is Tyrosine--tRNA ligase of Salmonella enteritidis PT4 (strain P125109).